The following is a 465-amino-acid chain: Clusterin-like protein 1 (465 aa).

An N-terminal signal peptide occupies residues 1 to 20; that stretch reads MKPSLLVFTVYLLWLKDCHC. Residues 62–106 are a coiled coil; that stretch reads MMERREEEHTNLMKTLKKCKEEKQEALKLMNEVQEHLEEEESLCQ. 4 disulfides stabilise this stretch: Cys-105-Cys-333, Cys-116-Cys-325, Cys-119-Cys-322, and Cys-124-Cys-315. N-linked (GlcNAc...) asparagine glycosylation is found at Asn-196, Asn-257, Asn-285, Asn-311, Asn-351, Asn-412, and Asn-430.

This sequence belongs to the clusterin family. In terms of tissue distribution, retina-specific (at protein level). In the light-adapted retina, expressed in the outer segment of cone photoreceptors. In the dark-adapted retina, strongly expressed in the outer plexiform layer in the region of contact between the cone pedicles and second order neurons with little or no expression in the cone photoreceptor outer segments.

The protein localises to the secreted. The sequence is that of Clusterin-like protein 1 (CLUL1) from Canis lupus familiaris (Dog).